A 249-amino-acid polypeptide reads, in one-letter code: DNA polymerase sliding clamp (249 aa).

Belongs to the PCNA family. As to quaternary structure, homotrimer. The subunits circularize to form a toroid; DNA passes through its center. Replication factor C (RFC) is required to load the toroid on the DNA.

Functionally, sliding clamp subunit that acts as a moving platform for DNA processing. Responsible for tethering the catalytic subunit of DNA polymerase and other proteins to DNA during high-speed replication. This is DNA polymerase sliding clamp from Nanoarchaeum equitans (strain Kin4-M).